The primary structure comprises 683 residues: DNA-directed RNA polymerase subunit beta' (683 aa).

Cys69, Cys71, Cys87, and Cys90 together coordinate Zn(2+). 3 residues coordinate Mg(2+): Asp489, Asp491, and Asp493.

The protein belongs to the RNA polymerase beta' chain family. RpoC1 subfamily. In plastids the minimal PEP RNA polymerase catalytic core is composed of four subunits: alpha, beta, beta', and beta''. When a (nuclear-encoded) sigma factor is associated with the core the holoenzyme is formed, which can initiate transcription. Requires Mg(2+) as cofactor. It depends on Zn(2+) as a cofactor.

Its subcellular location is the plastid. The protein resides in the chloroplast. It catalyses the reaction RNA(n) + a ribonucleoside 5'-triphosphate = RNA(n+1) + diphosphate. Its function is as follows. DNA-dependent RNA polymerase catalyzes the transcription of DNA into RNA using the four ribonucleoside triphosphates as substrates. This Zea mays (Maize) protein is DNA-directed RNA polymerase subunit beta'.